Reading from the N-terminus, the 392-residue chain is Nicotinate phosphoribosyltransferase (392 aa).

At H216 the chain carries Phosphohistidine; by autocatalysis.

The protein belongs to the NAPRTase family. Post-translationally, transiently phosphorylated on a His residue during the reaction cycle. Phosphorylation strongly increases the affinity for substrates and increases the rate of nicotinate D-ribonucleotide production. Dephosphorylation regenerates the low-affinity form of the enzyme, leading to product release.

It catalyses the reaction nicotinate + 5-phospho-alpha-D-ribose 1-diphosphate + ATP + H2O = nicotinate beta-D-ribonucleotide + ADP + phosphate + diphosphate. It participates in cofactor biosynthesis; NAD(+) biosynthesis; nicotinate D-ribonucleotide from nicotinate: step 1/1. In terms of biological role, catalyzes the synthesis of beta-nicotinate D-ribonucleotide from nicotinate and 5-phospho-D-ribose 1-phosphate at the expense of ATP. The sequence is that of Nicotinate phosphoribosyltransferase from Cupriavidus necator (strain ATCC 17699 / DSM 428 / KCTC 22496 / NCIMB 10442 / H16 / Stanier 337) (Ralstonia eutropha).